The following is a 106-amino-acid chain: Large ribosomal subunit protein eL30 (106 aa).

It belongs to the eukaryotic ribosomal protein eL30 family.

The sequence is that of Large ribosomal subunit protein eL30 from Methanococcus maripaludis (strain C5 / ATCC BAA-1333).